Consider the following 365-residue polypeptide: Membrane cofactor protein (365 aa).

The first 44 residues, 1-44 (MTAAPLMPDSTHPCRRRKSYTFFWCSLGVYAEALLFLLSHLSDA), serve as a signal peptide directing secretion. Sushi domains follow at residues 45 to 106 (CELP…GCIK), 107 to 170 (VQCT…HCEK), 171 to 236 (IYCL…ECKV), and 237 to 296 (VKCP…KCLK). The Extracellular portion of the chain corresponds to 45-329 (CELPRPFEAM…GIFSQELDAW (285 aa)). 6 cysteine pairs are disulfide-bonded: Cys-109–Cys-151, Cys-137–Cys-168, Cys-173–Cys-221, Cys-202–Cys-234, Cys-239–Cys-281, and Cys-267–Cys-294. N-linked (GlcNAc...) asparagine glycosylation occurs at Asn-181. O-linked (GalNAc...) threonine glycosylation is present at Thr-205. O-linked (GalNAc...) threonine glycans are attached at residues Thr-301 and Thr-304. N-linked (GlcNAc...) asparagine glycosylation is present at Asn-310. An O-linked (GalNAc...) threonine glycan is attached at Thr-312. Residues 330–350 (IIALIVITSIVGVFILCLIVL) form a helical membrane-spanning segment. At 351–365 (RCFEHRKKTNVSAAR) the chain is on the cytoplasmic side.

In terms of assembly, interacts with C3b. Interacts with C4b. Interacts with moesin/MSN. May be O-glycosylated. In terms of processing, N-glycosylated. In terms of tissue distribution, present only in testis (at protein level).

Its subcellular location is the cytoplasmic vesicle. The protein localises to the secretory vesicle. The protein resides in the acrosome inner membrane. It localises to the secreted. Functionally, may be involved in the fusion of the spermatozoa with the oocyte during fertilization. This is Membrane cofactor protein (Cd46) from Mus musculus (Mouse).